Here is an 885-residue protein sequence, read N- to C-terminus: DNA-directed RNA polymerase subunit Rpo1N (885 aa).

Zn(2+)-binding residues include Cys-60, Cys-63, Cys-70, His-73, Cys-100, Cys-103, Cys-150, and Cys-153. Mg(2+) contacts are provided by Asp-464, Asp-466, and Asp-468.

The protein belongs to the RNA polymerase beta' chain family. As to quaternary structure, part of the RNA polymerase complex. It depends on Mg(2+) as a cofactor. Zn(2+) serves as cofactor.

Its subcellular location is the cytoplasm. It carries out the reaction RNA(n) + a ribonucleoside 5'-triphosphate = RNA(n+1) + diphosphate. In terms of biological role, DNA-dependent RNA polymerase (RNAP) catalyzes the transcription of DNA into RNA using the four ribonucleoside triphosphates as substrates. Forms the clamp head domain. This Thermoplasma acidophilum (strain ATCC 25905 / DSM 1728 / JCM 9062 / NBRC 15155 / AMRC-C165) protein is DNA-directed RNA polymerase subunit Rpo1N.